The following is a 502-amino-acid chain: Chlorophyllide reductase 52.5 kDa chain (502 aa).

The next 3 membrane-spanning stretches (helical) occupy residues 70–87 (VGTI…LSFV), 131–147 (AIVV…GVPL), and 221–238 (VMIG…GPVV).

This sequence belongs to the BchN/ChlN family. As to quaternary structure, chlorophyllide reductase is composed of three subunits; BchX, BchY and BchZ. Forms a heterodimer of one BchY and one BchZ subunit.

Its subcellular location is the cell membrane. It carries out the reaction 3-deacetyl-3-vinylbacteriochlorophyllide a + 2 oxidized [2Fe-2S]-[ferredoxin] + ADP + phosphate = chlorophyllide a + 2 reduced [2Fe-2S]-[ferredoxin] + ATP + H2O + H(+). The catalysed reaction is bacteriochlorophyllide a + 2 oxidized [2Fe-2S]-[ferredoxin] + ADP + phosphate = 3-acetyl-3-devinylchlorophyllide a + 2 reduced [2Fe-2S]-[ferredoxin] + ATP + H2O + H(+). It catalyses the reaction 3-deacetyl-3-(1-hydroxyethyl)bacteriochlorophyllide a + 2 oxidized [2Fe-2S]-[ferredoxin] + ADP + phosphate = 3-devinyl-3-(1-hydroxyethyl)chlorophyllide a + 2 reduced [2Fe-2S]-[ferredoxin] + ATP + H2O + H(+). The protein operates within porphyrin-containing compound metabolism; bacteriochlorophyll biosynthesis (light-independent). In terms of biological role, converts chlorophylls (Chl) into bacteriochlorophylls (BChl) by reducing ring B of the tetrapyrrole. The polypeptide is Chlorophyllide reductase 52.5 kDa chain (bchY) (Cereibacter sphaeroides (strain ATCC 17023 / DSM 158 / JCM 6121 / CCUG 31486 / LMG 2827 / NBRC 12203 / NCIMB 8253 / ATH 2.4.1.) (Rhodobacter sphaeroides)).